The chain runs to 679 residues: NADPH--cytochrome P450 reductase (679 aa).

Residues 1–21 (MADSHGDTGATMPEAAAQEAS) are Lumenal-facing. The chain crosses the membrane as a helical span at residues 22–42 (VFSMTDVVLFSLIVGLITYWF). Residues 43-679 (LFRKKKEEVP…KGRYSLDVWS (637 aa)) lie on the Cytoplasmic side of the membrane. S64 bears the Phosphoserine mark. The 145-residue stretch at 81-225 (IVVFYGSQTG…DFITWREQFW (145 aa)) folds into the Flavodoxin-like domain. FMN-binding positions include 87–92 (SQTGTA), 139–142 (ATYG), 174–183 (LGNKTYEHFN), and D209. Residues 280-522 (KNPFLATVTT…FVRKSQFRLP (243 aa)) form the FAD-binding FR-type domain. Residue R299 coordinates NADP(+). FAD is bound by residues R425, 455-458 (RYYS), 473-475 (CAV), Y479, and 489-492 (GVAT). NADP(+) contacts are provided by residues T536, 597–598 (SR), 603–607 (KVYVQ), and D640. An FAD-binding site is contributed by W678.

Belongs to the NADPH--cytochrome P450 reductase family. The protein in the N-terminal section; belongs to the flavodoxin family. This sequence in the C-terminal section; belongs to the flavoprotein pyridine nucleotide cytochrome reductase family. Requires FAD as cofactor. FMN serves as cofactor.

The protein resides in the endoplasmic reticulum membrane. The catalysed reaction is 2 oxidized [cytochrome P450] + NADPH = 2 reduced [cytochrome P450] + NADP(+) + H(+). Its function is as follows. This enzyme is required for electron transfer from NADP to cytochrome P450 in microsomes. It can also provide electron transfer to heme oxygenase and cytochrome B5. This chain is NADPH--cytochrome P450 reductase, found in Oryctolagus cuniculus (Rabbit).